Here is a 379-residue protein sequence, read N- to C-terminus: Dual-specificity RNA methyltransferase RlmN (379 aa).

Glu-95 serves as the catalytic Proton acceptor. The region spanning 101 to 345 is the Radical SAM core domain; it reads EETRGTLCVS…TTVRKTRGDD (245 aa). Cysteines 108 and 350 form a disulfide. [4Fe-4S] cluster-binding residues include Cys-115, Cys-119, and Cys-122. Residues 176–177, Ser-208, 230–232, and Asn-307 each bind S-adenosyl-L-methionine; these read GE and SLH. The S-methylcysteine intermediate role is filled by Cys-350.

Belongs to the radical SAM superfamily. RlmN family. Requires [4Fe-4S] cluster as cofactor.

The protein resides in the cytoplasm. It carries out the reaction adenosine(2503) in 23S rRNA + 2 reduced [2Fe-2S]-[ferredoxin] + 2 S-adenosyl-L-methionine = 2-methyladenosine(2503) in 23S rRNA + 5'-deoxyadenosine + L-methionine + 2 oxidized [2Fe-2S]-[ferredoxin] + S-adenosyl-L-homocysteine. It catalyses the reaction adenosine(37) in tRNA + 2 reduced [2Fe-2S]-[ferredoxin] + 2 S-adenosyl-L-methionine = 2-methyladenosine(37) in tRNA + 5'-deoxyadenosine + L-methionine + 2 oxidized [2Fe-2S]-[ferredoxin] + S-adenosyl-L-homocysteine. Functionally, specifically methylates position 2 of adenine 2503 in 23S rRNA and position 2 of adenine 37 in tRNAs. m2A2503 modification seems to play a crucial role in the proofreading step occurring at the peptidyl transferase center and thus would serve to optimize ribosomal fidelity. This is Dual-specificity RNA methyltransferase RlmN from Burkholderia vietnamiensis (strain G4 / LMG 22486) (Burkholderia cepacia (strain R1808)).